Here is a 62-residue protein sequence, read N- to C-terminus: Synergistic-type venom protein C8S2, chain 1 (62 aa).

3 disulfide bridges follow: Cys3–Cys24, Cys17–Cys42, and Cys46–Cys57.

This sequence belongs to the three-finger toxin family. Short-chain subfamily. Aminergic toxin sub-subfamily. In terms of assembly, heterodimer of C8S2 chain 1 and chain 2 (AC P01411); disulfide-linked. Expressed by the venom gland.

The protein localises to the secreted. Its function is as follows. This protein shows a synergetic toxic effect in that it enhances the toxicity of other toxins. The chain is Synergistic-type venom protein C8S2, chain 1 from Dendroaspis angusticeps (Eastern green mamba).